Here is a 58-residue protein sequence, read N- to C-terminus: PIEVNDDCMACEACVEICPDVFEMNEEGDKAVVINPDSDLDCVEEAIDSCPAEAIVRS.

4Fe-4S ferredoxin-type domains follow at residues Ile-2–Glu-27 and Lys-30–Ser-58. Cys-8 contributes to the [3Fe-4S] cluster binding site. Cys-11 is modified (cysteine methyl disulfide). Cys-14 contributes to the [3Fe-4S] cluster binding site. The cysteines at positions 18 and 42 are disulfide-linked. Residue Cys-50 coordinates [3Fe-4S] cluster.

In terms of assembly, homodimer (ferredoxin I) or homotetramer (ferredoxin II). It depends on [3Fe-4S] cluster as a cofactor. The cofactor is [4Fe-4S] cluster.

Ferredoxins are iron-sulfur proteins that transfer electrons in a wide variety of metabolic reactions. In Megalodesulfovibrio gigas (Desulfovibrio gigas), this protein is Ferredoxin-2.